Here is a 502-residue protein sequence, read N- to C-terminus: Probable cytosol aminopeptidase (502 aa).

Mn(2+) is bound by residues Lys270 and Asp275. The active site involves Lys282. Mn(2+)-binding residues include Asp293, Asp352, and Glu354. Residue Arg356 is part of the active site.

This sequence belongs to the peptidase M17 family. Mn(2+) is required as a cofactor.

Its subcellular location is the cytoplasm. It catalyses the reaction Release of an N-terminal amino acid, Xaa-|-Yaa-, in which Xaa is preferably Leu, but may be other amino acids including Pro although not Arg or Lys, and Yaa may be Pro. Amino acid amides and methyl esters are also readily hydrolyzed, but rates on arylamides are exceedingly low.. The catalysed reaction is Release of an N-terminal amino acid, preferentially leucine, but not glutamic or aspartic acids.. In terms of biological role, presumably involved in the processing and regular turnover of intracellular proteins. Catalyzes the removal of unsubstituted N-terminal amino acids from various peptides. This is Probable cytosol aminopeptidase from Buchnera aphidicola subsp. Schizaphis graminum (strain Sg).